The following is a 558-amino-acid chain: 2-isopropylmalate synthase (558 aa).

The Pyruvate carboxyltransferase domain occupies 31–305 (PRWCSTDLRD…YPNLDFSDMR (275 aa)). Positions 40, 244, 246, and 280 each coordinate Mg(2+). The regulatory domain stretch occupies residues 439-558 (NPDDKGQMKL…NACHPLYKEA (120 aa)).

It belongs to the alpha-IPM synthase/homocitrate synthase family. LeuA type 2 subfamily. As to quaternary structure, homodimer. The cofactor is Mg(2+).

It is found in the cytoplasm. The catalysed reaction is 3-methyl-2-oxobutanoate + acetyl-CoA + H2O = (2S)-2-isopropylmalate + CoA + H(+). The protein operates within amino-acid biosynthesis; L-leucine biosynthesis; L-leucine from 3-methyl-2-oxobutanoate: step 1/4. Its function is as follows. Catalyzes the condensation of the acetyl group of acetyl-CoA with 3-methyl-2-oxobutanoate (2-ketoisovalerate) to form 3-carboxy-3-hydroxy-4-methylpentanoate (2-isopropylmalate). The sequence is that of 2-isopropylmalate synthase from Marinomonas sp. (strain MWYL1).